The following is a 252-amino-acid chain: Thiazole synthase (252 aa).

The Schiff-base intermediate with DXP role is filled by K91. 1-deoxy-D-xylulose 5-phosphate is bound by residues G152, 179 to 180 (AG), and 201 to 202 (NT).

This sequence belongs to the ThiG family. In terms of assembly, homotetramer. Forms heterodimers with either ThiH or ThiS.

It is found in the cytoplasm. It catalyses the reaction [ThiS sulfur-carrier protein]-C-terminal-Gly-aminoethanethioate + 2-iminoacetate + 1-deoxy-D-xylulose 5-phosphate = [ThiS sulfur-carrier protein]-C-terminal Gly-Gly + 2-[(2R,5Z)-2-carboxy-4-methylthiazol-5(2H)-ylidene]ethyl phosphate + 2 H2O + H(+). It functions in the pathway cofactor biosynthesis; thiamine diphosphate biosynthesis. Its function is as follows. Catalyzes the rearrangement of 1-deoxy-D-xylulose 5-phosphate (DXP) to produce the thiazole phosphate moiety of thiamine. Sulfur is provided by the thiocarboxylate moiety of the carrier protein ThiS. In vitro, sulfur can be provided by H(2)S. The protein is Thiazole synthase of Erwinia pyrifoliae (strain DSM 12162 / Ep1/96).